The chain runs to 131 residues: Large ribosomal subunit protein bL17 (131 aa).

It belongs to the bacterial ribosomal protein bL17 family. In terms of assembly, part of the 50S ribosomal subunit. Contacts protein L32.

The sequence is that of Large ribosomal subunit protein bL17 from Teredinibacter turnerae (strain ATCC 39867 / T7901).